Here is a 131-residue protein sequence, read N- to C-terminus: MVKNSTSIRTRKRVKKQILDGIAHIHASFNNTIVTITDRQGNALGWATSGGSGFRGSRKSTPFAAQVAAERCAEIVKDYGIKNLEVMVKGPGPGRESTIRALNAAGFRITNITDVTPIPHNGCRPPKKRRV.

It belongs to the universal ribosomal protein uS11 family. As to quaternary structure, part of the 30S ribosomal subunit. Interacts with proteins S7 and S18. Binds to IF-3.

Its function is as follows. Located on the platform of the 30S subunit, it bridges several disparate RNA helices of the 16S rRNA. Forms part of the Shine-Dalgarno cleft in the 70S ribosome. The chain is Small ribosomal subunit protein uS11 from Buchnera aphidicola subsp. Acyrthosiphon pisum (strain 5A).